A 113-amino-acid polypeptide reads, in one-letter code: MQAKAILRNFRMSPQKVRLVADLVRGKNVTEALGILQYLPHKAAPEIARVIKSAKANADHNYQMSPEDLVVKTIMVDAGPVLKRYMPRARGRGDRILKRSSHITVIVDDGEVL.

It belongs to the universal ribosomal protein uL22 family. Part of the 50S ribosomal subunit.

Its function is as follows. This protein binds specifically to 23S rRNA; its binding is stimulated by other ribosomal proteins, e.g. L4, L17, and L20. It is important during the early stages of 50S assembly. It makes multiple contacts with different domains of the 23S rRNA in the assembled 50S subunit and ribosome. The globular domain of the protein is located near the polypeptide exit tunnel on the outside of the subunit, while an extended beta-hairpin is found that lines the wall of the exit tunnel in the center of the 70S ribosome. The chain is Large ribosomal subunit protein uL22 from Herpetosiphon aurantiacus (strain ATCC 23779 / DSM 785 / 114-95).